The following is a 335-amino-acid chain: Protein-arginine N-acetylglucosaminyltransferase SseK3 (335 aa).

UDP-N-acetyl-alpha-D-glucosamine contacts are provided by residues 51-53 (QWF) and Y75. R153 and R184 each carry an N-beta-linked (GlcNAc) arginine; by autocatalysis glycan. Residue 224-227 (YLDA) coordinates UDP-N-acetyl-alpha-D-glucosamine. A DXD motif motif is present at residues 226–228 (DAD). D228 is a Mn(2+) binding site. E258 acts as the Proton acceptor in catalysis. An N-beta-linked (GlcNAc) arginine; by autocatalysis glycan is attached at R305. Residues D325 and S327 each contribute to the Mn(2+) site. UDP-N-acetyl-alpha-D-glucosamine contacts are provided by residues S327 and 332–335 (SSWR). N-beta-linked (GlcNAc) arginine; by autocatalysis glycosylation occurs at R335.

This sequence belongs to the glycosyltransferase NleB family. In terms of assembly, interacts with host TRIM32; without mediating its GlcNAcylation. Requires Mn(2+) as cofactor. Auto-glycosylated: arginine GlcNAcylation is required for activity toward death domain-containing host target proteins.

It is found in the secreted. Its subcellular location is the host Golgi apparatus. The catalysed reaction is L-arginyl-[protein] + UDP-N-acetyl-alpha-D-glucosamine = N(omega)-(N-acetyl-beta-D-glucosaminyl)-L-arginyl-[protein] + UDP + H(+). In terms of biological role, protein-arginine N-acetylglucosaminyltransferase effector that disrupts TNF signaling in infected cells, including NF-kappa-B signaling and apoptosis. Acts by catalyzing the transfer of a single N-acetylglucosamine (GlcNAc) to a conserved arginine residue in the death domain of host proteins such as TRADD, TNFRSF1A/TNFR1 and TNFRSF10B/TRAILR2: arginine GlcNAcylation prevents homotypic/heterotypic death domain interactions and assembly of the oligomeric TNF-alpha receptor complex, thereby disrupting TNF signaling. Also acts on host proteins without a death domain: catalyzes arginine GlcNAcylation of host small Rab GTPase (Rab1, Rab5 and Rab11), thereby preventing GTPase activity and leading to impaired host vesicular protein transport. Also mediates auto-GlcNAcylation, which is required for activity toward death domain-containing host target proteins. In Salmonella typhimurium (strain SL1344), this protein is Protein-arginine N-acetylglucosaminyltransferase SseK3.